Here is a 430-residue protein sequence, read N- to C-terminus: Histidine--tRNA ligase (430 aa).

It belongs to the class-II aminoacyl-tRNA synthetase family. Homodimer.

The protein resides in the cytoplasm. It catalyses the reaction tRNA(His) + L-histidine + ATP = L-histidyl-tRNA(His) + AMP + diphosphate + H(+). The chain is Histidine--tRNA ligase from Chlamydia caviae (strain ATCC VR-813 / DSM 19441 / 03DC25 / GPIC) (Chlamydophila caviae).